Reading from the N-terminus, the 425-residue chain is UDP-N-acetylglucosamine 1-carboxyvinyltransferase (425 aa).

Residue 25–26 coordinates phosphoenolpyruvate; the sequence is KN. Arg95 lines the UDP-N-acetyl-alpha-D-glucosamine pocket. The Proton donor role is filled by Cys119. Cys119 bears the 2-(S-cysteinyl)pyruvic acid O-phosphothioketal mark. UDP-N-acetyl-alpha-D-glucosamine contacts are provided by residues 124–128, Asp306, and Ile328; that span reads RPVDQ.

Belongs to the EPSP synthase family. MurA subfamily.

It is found in the cytoplasm. It carries out the reaction phosphoenolpyruvate + UDP-N-acetyl-alpha-D-glucosamine = UDP-N-acetyl-3-O-(1-carboxyvinyl)-alpha-D-glucosamine + phosphate. It functions in the pathway cell wall biogenesis; peptidoglycan biosynthesis. Its function is as follows. Cell wall formation. Adds enolpyruvyl to UDP-N-acetylglucosamine. The polypeptide is UDP-N-acetylglucosamine 1-carboxyvinyltransferase (Thermus thermophilus (strain ATCC 27634 / DSM 579 / HB8)).